We begin with the raw amino-acid sequence, 100 residues long: Large ribosomal subunit protein uL23 (100 aa).

Belongs to the universal ribosomal protein uL23 family. As to quaternary structure, part of the 50S ribosomal subunit. Contacts protein L29, and trigger factor when it is bound to the ribosome.

Its function is as follows. One of the early assembly proteins it binds 23S rRNA. One of the proteins that surrounds the polypeptide exit tunnel on the outside of the ribosome. Forms the main docking site for trigger factor binding to the ribosome. This is Large ribosomal subunit protein uL23 from Lacticaseibacillus casei (strain BL23) (Lactobacillus casei).